The primary structure comprises 342 residues: Succinylglutamate desuccinylase (342 aa).

Zn(2+) contacts are provided by H64, E67, and H159. The active site involves E222.

It belongs to the AspA/AstE family. Succinylglutamate desuccinylase subfamily. Zn(2+) is required as a cofactor.

It catalyses the reaction N-succinyl-L-glutamate + H2O = L-glutamate + succinate. Its pathway is amino-acid degradation; L-arginine degradation via AST pathway; L-glutamate and succinate from L-arginine: step 5/5. In terms of biological role, transforms N(2)-succinylglutamate into succinate and glutamate. The polypeptide is Succinylglutamate desuccinylase (Burkholderia orbicola (strain AU 1054)).